Reading from the N-terminus, the 83-residue chain is Exodeoxyribonuclease 7 small subunit (83 aa).

Belongs to the XseB family. As to quaternary structure, heterooligomer composed of large and small subunits.

The protein localises to the cytoplasm. The catalysed reaction is Exonucleolytic cleavage in either 5'- to 3'- or 3'- to 5'-direction to yield nucleoside 5'-phosphates.. Functionally, bidirectionally degrades single-stranded DNA into large acid-insoluble oligonucleotides, which are then degraded further into small acid-soluble oligonucleotides. The polypeptide is Exodeoxyribonuclease 7 small subunit (Aeromonas salmonicida (strain A449)).